A 499-amino-acid polypeptide reads, in one-letter code: FAD-dependent oxidoreductase domain-containing protein 1 (499 aa).

A helical membrane pass occupies residues 75-95; sequence ERADVVIVGGGVMGWSIAYWL.

It depends on FAD as a cofactor.

It localises to the mitochondrion inner membrane. In terms of biological role, required for the assembly of the mitochondrial membrane respiratory chain NADH dehydrogenase (Complex I). Involved in mid-late stages of complex I assembly. This chain is FAD-dependent oxidoreductase domain-containing protein 1 (foxred1), found in Xenopus laevis (African clawed frog).